The primary structure comprises 399 residues: Tryptophan synthase beta chain (399 aa).

N6-(pyridoxal phosphate)lysine is present on Lys92.

This sequence belongs to the TrpB family. Tetramer of two alpha and two beta chains. Pyridoxal 5'-phosphate serves as cofactor.

It carries out the reaction (1S,2R)-1-C-(indol-3-yl)glycerol 3-phosphate + L-serine = D-glyceraldehyde 3-phosphate + L-tryptophan + H2O. It functions in the pathway amino-acid biosynthesis; L-tryptophan biosynthesis; L-tryptophan from chorismate: step 5/5. Functionally, the beta subunit is responsible for the synthesis of L-tryptophan from indole and L-serine. This chain is Tryptophan synthase beta chain, found in Legionella pneumophila (strain Corby).